The chain runs to 190 residues: R46 site-specific recombinase (190 aa).

Positions 2–137 (RLFGYARVST…EGRQEAKLKG (136 aa)) constitute a Resolvase/invertase-type recombinase catalytic domain. Catalysis depends on serine 10, which acts as the O-(5'-phospho-DNA)-serine intermediate. Residues 161 to 180 (ATDIARRLSIARSTVYKILE) constitute a DNA-binding region (H-T-H motif).

It belongs to the site-specific recombinase resolvase family.

Its function is as follows. Site-specific recombination protein. The chain is R46 site-specific recombinase (tnpR) from Escherichia coli.